The chain runs to 215 residues: Protein slowmo (215 aa).

A PRELI/MSF1 domain is found at 1–170 (MKIWTSEHIF…VIGLINTEVK (170 aa)).

The protein belongs to the slowmo family. Expressed in specific tissues such as the developing central nervous system (CNS) and both the male and female germline. In the CNS, it is restricted in a subset of cells during embryogenesis and early larval development. In embryos, it is also expressed in salivary glands. In the testis, expressed in somatic cyst cells throughout the distal region where the mitotic cysts develop, extending through to meiotic cysts.

It is found in the mitochondrion. Its function is as follows. Required to regulate peristaltic movement and also for germline proliferation in males and females. The protein is Protein slowmo (slmo) of Drosophila melanogaster (Fruit fly).